Here is a 403-residue protein sequence, read N- to C-terminus: Ribosomal RNA large subunit methyltransferase I (403 aa).

The region spanning 9–88 (YPRLVLSKGR…EPVDIAFFTR (80 aa)) is the PUA domain.

It belongs to the methyltransferase superfamily. RlmI family.

It localises to the cytoplasm. It carries out the reaction cytidine(1962) in 23S rRNA + S-adenosyl-L-methionine = 5-methylcytidine(1962) in 23S rRNA + S-adenosyl-L-homocysteine + H(+). In terms of biological role, specifically methylates the cytosine at position 1962 (m5C1962) of 23S rRNA. This chain is Ribosomal RNA large subunit methyltransferase I, found in Salmonella arizonae (strain ATCC BAA-731 / CDC346-86 / RSK2980).